The sequence spans 364 residues: Peptide chain release factor 2 (364 aa).

An N5-methylglutamine modification is found at Q251.

It belongs to the prokaryotic/mitochondrial release factor family. Methylated by PrmC. Methylation increases the termination efficiency of RF2.

The protein resides in the cytoplasm. Its function is as follows. Peptide chain release factor 2 directs the termination of translation in response to the peptide chain termination codons UGA and UAA. This chain is Peptide chain release factor 2 (prfB), found in Buchnera aphidicola subsp. Schizaphis graminum (strain Sg).